Consider the following 451-residue polypeptide: Exodeoxyribonuclease 7 large subunit (451 aa).

The protein belongs to the XseA family. Heterooligomer composed of large and small subunits.

The protein resides in the cytoplasm. It catalyses the reaction Exonucleolytic cleavage in either 5'- to 3'- or 3'- to 5'-direction to yield nucleoside 5'-phosphates.. Bidirectionally degrades single-stranded DNA into large acid-insoluble oligonucleotides, which are then degraded further into small acid-soluble oligonucleotides. The polypeptide is Exodeoxyribonuclease 7 large subunit (Neisseria meningitidis serogroup A / serotype 4A (strain DSM 15465 / Z2491)).